A 297-amino-acid chain; its full sequence is Large ribosomal subunit protein uL18 (297 aa).

N-acetylglycine is present on glycine 2. An N6-acetyllysine mark is found at lysine 5 and lysine 48. Phosphoserine is present on serine 185. N6-acetyllysine; alternate is present on lysine 220. Lysine 220 is covalently cross-linked (Glycyl lysine isopeptide (Lys-Gly) (interchain with G-Cter in SUMO1); alternate). Lysine 220 is covalently cross-linked (Glycyl lysine isopeptide (Lys-Gly) (interchain with G-Cter in SUMO2); alternate). Threonine 232 is modified (phosphothreonine). Residues valine 252–serine 297 form a disordered region. Over residues lysine 258–arginine 268 the composition is skewed to basic residues. Residue serine 272 is modified to Phosphoserine.

Belongs to the universal ribosomal protein uL18 family. Component of the large ribosomal subunit (LSU). Part of the 5S RNP complex, which is a LSU subcomplex composed of the 5S RNA, RPL5 and RPL11. Component of a hexameric 5S RNP precursor complex, composed of 5S RNA, RRS1, RPF2/BXDC1, RPL5, RPL11 and HEATR3; this complex acts as a precursor for ribosome assembly. Interacts with NVL in an ATP-dependent manner. Interacts with RRP1B. Interacts with IPO5, IPO7 and KPNB1; these interactions may be involved in RPL5 nuclear import for the assembly of ribosomal subunits.

Its subcellular location is the cytoplasm. The protein resides in the nucleus. The protein localises to the nucleolus. Its function is as follows. Component of the ribosome, a large ribonucleoprotein complex responsible for the synthesis of proteins in the cell. The small ribosomal subunit (SSU) binds messenger RNAs (mRNAs) and translates the encoded message by selecting cognate aminoacyl-transfer RNA (tRNA) molecules. The large subunit (LSU) contains the ribosomal catalytic site termed the peptidyl transferase center (PTC), which catalyzes the formation of peptide bonds, thereby polymerizing the amino acids delivered by tRNAs into a polypeptide chain. The nascent polypeptides leave the ribosome through a tunnel in the LSU and interact with protein factors that function in enzymatic processing, targeting, and the membrane insertion of nascent chains at the exit of the ribosomal tunnel. As part of the 5S RNP/5S ribonucleoprotein particle it is an essential component of the LSU, required for its formation and the maturation of rRNAs. It also couples ribosome biogenesis to p53/TP53 activation. As part of the 5S RNP it accumulates in the nucleoplasm and inhibits MDM2, when ribosome biogenesis is perturbed, mediating the stabilization and the activation of TP53. The sequence is that of Large ribosomal subunit protein uL18 (RPL5) from Bos taurus (Bovine).